A 254-amino-acid chain; its full sequence is Imidazole glycerol phosphate synthase subunit HisF (254 aa).

Residues D12 and D131 contribute to the active site.

It belongs to the HisA/HisF family. As to quaternary structure, heterodimer of HisH and HisF.

Its subcellular location is the cytoplasm. The catalysed reaction is 5-[(5-phospho-1-deoxy-D-ribulos-1-ylimino)methylamino]-1-(5-phospho-beta-D-ribosyl)imidazole-4-carboxamide + L-glutamine = D-erythro-1-(imidazol-4-yl)glycerol 3-phosphate + 5-amino-1-(5-phospho-beta-D-ribosyl)imidazole-4-carboxamide + L-glutamate + H(+). It participates in amino-acid biosynthesis; L-histidine biosynthesis; L-histidine from 5-phospho-alpha-D-ribose 1-diphosphate: step 5/9. Its function is as follows. IGPS catalyzes the conversion of PRFAR and glutamine to IGP, AICAR and glutamate. The HisF subunit catalyzes the cyclization activity that produces IGP and AICAR from PRFAR using the ammonia provided by the HisH subunit. The sequence is that of Imidazole glycerol phosphate synthase subunit HisF from Leuconostoc mesenteroides subsp. mesenteroides (strain ATCC 8293 / DSM 20343 / BCRC 11652 / CCM 1803 / JCM 6124 / NCDO 523 / NBRC 100496 / NCIMB 8023 / NCTC 12954 / NRRL B-1118 / 37Y).